We begin with the raw amino-acid sequence, 203 residues long: Nascent polypeptide-associated complex subunit alpha (203 aa).

Positions 1–19 are enriched in basic and acidic residues; sequence MADPRIEELPDEEVPKTNV. The segment at 1–45 is disordered; it reads MADPRIEELPDEEVPKTNVEDAADSSESEAGEEPTIPGGAAVTIH. Acidic residues predominate over residues 21-32; it reads DAADSSESEAGE. The region spanning 46–111 is the NAC-A/B domain; sequence SRNEKKARKA…AKIEDLNSQA (66 aa). Positions 118-167 are disordered; that stretch reads QLAAAEAAGEHAGHDHDHDKGKGKAPETEAKKEEEEDDGEEVDETGLEPK. The segment covering 125 to 150 has biased composition (basic and acidic residues); sequence AGEHAGHDHDHDKGKGKAPETEAKKE. Acidic residues predominate over residues 151-163; the sequence is EEEDDGEEVDETG. Residues 164 to 203 enclose the UBA domain; sequence LEPKDIDLVMAQANVSRKKAVKALRENDNDIVNSIMALSI.

This sequence belongs to the NAC-alpha family. Part of the nascent polypeptide-associated complex (NAC), consisting of egd2 and egd1. NAC associates with ribosomes via egd1.

The protein resides in the cytoplasm. It localises to the nucleus. Component of the nascent polypeptide-associated complex (NAC), a dynamic component of the ribosomal exit tunnel, protecting the emerging polypeptides from interaction with other cytoplasmic proteins to ensure appropriate nascent protein targeting. The NAC complex also promotes mitochondrial protein import by enhancing productive ribosome interactions with the outer mitochondrial membrane and blocks the inappropriate interaction of ribosomes translating non-secretory nascent polypeptides with translocation sites in the membrane of the endoplasmic reticulum. Egd2 may also be involved in transcription regulation. The protein is Nascent polypeptide-associated complex subunit alpha (egd2) of Emericella nidulans (strain FGSC A4 / ATCC 38163 / CBS 112.46 / NRRL 194 / M139) (Aspergillus nidulans).